The chain runs to 214 residues: Probable transaldolase (214 aa).

Residue Lys-83 is the Schiff-base intermediate with substrate of the active site.

The protein belongs to the transaldolase family. Type 3B subfamily.

It localises to the cytoplasm. The catalysed reaction is D-sedoheptulose 7-phosphate + D-glyceraldehyde 3-phosphate = D-erythrose 4-phosphate + beta-D-fructose 6-phosphate. It functions in the pathway carbohydrate degradation; pentose phosphate pathway; D-glyceraldehyde 3-phosphate and beta-D-fructose 6-phosphate from D-ribose 5-phosphate and D-xylulose 5-phosphate (non-oxidative stage): step 2/3. In terms of biological role, transaldolase is important for the balance of metabolites in the pentose-phosphate pathway. In Desulfotalea psychrophila (strain LSv54 / DSM 12343), this protein is Probable transaldolase.